We begin with the raw amino-acid sequence, 446 residues long: Histidinol dehydrogenase homolog (446 aa).

Residue His-266 participates in Zn(2+) binding. Residues Glu-334 and His-335 each act as proton acceptor in the active site. Position 427 (His-427) interacts with Zn(2+).

It belongs to the histidinol dehydrogenase family. Zn(2+) serves as cofactor.

The chain is Histidinol dehydrogenase homolog from Colwellia psychrerythraea (strain 34H / ATCC BAA-681) (Vibrio psychroerythus).